The following is a 291-amino-acid chain: Shikimate dehydrogenase (NADP(+)) (291 aa).

Shikimate is bound by residues Ser23 to Ser25 and Thr70. Lys74 serves as the catalytic Proton acceptor. Residues Asn95 and Asp110 each contribute to the shikimate site. Residues Gly135–Ala139 and Leu232 contribute to the NADP(+) site. Position 234 (Tyr234) interacts with shikimate. Residue Gly255 coordinates NADP(+).

It belongs to the shikimate dehydrogenase family. In terms of assembly, homodimer.

It carries out the reaction shikimate + NADP(+) = 3-dehydroshikimate + NADPH + H(+). Its pathway is metabolic intermediate biosynthesis; chorismate biosynthesis; chorismate from D-erythrose 4-phosphate and phosphoenolpyruvate: step 4/7. In terms of biological role, involved in the biosynthesis of the chorismate, which leads to the biosynthesis of aromatic amino acids. Catalyzes the reversible NADPH linked reduction of 3-dehydroshikimate (DHSA) to yield shikimate (SA). This chain is Shikimate dehydrogenase (NADP(+)), found in Desulforamulus reducens (strain ATCC BAA-1160 / DSM 100696 / MI-1) (Desulfotomaculum reducens).